A 291-amino-acid polypeptide reads, in one-letter code: MRNTSKEVQSTSYRYAPCDWYYHLPVKRSEKPVGAPPASQIPGLSDLRDSPNVNLPRARRYWIKETDSEYVKLAKQGGRPDLLKHFAPGTRQGSPVAYSLPDWYIHHSKPPTSHQREVPVVSIPDYMVYEEFNPDQANGSYESRQGPFDFDRKTIWQREAEELENVKRKVKLPAINSKNPSKTGTPVSHKEPERSRLSLPPMPGQKNSSPTNFSKLISNGYKDEWLQQQKAEADRRTPKTSRASVSSKSTEDSKSNQDTETPENPETPEGSEKTPDAEVSSPSESTPAELK.

Disordered regions lie at residues 29 to 50 (SEKP…LRDS) and 168 to 291 (RKVK…AELK). Position 50 is a phosphoserine (S50). Polar residues-rich tracts occupy residues 176–186 (NSKNPSKTGTP) and 205–217 (QKNS…SKLI). Residues 221 to 237 (YKDEWLQQQKAEADRRT) are compositionally biased toward basic and acidic residues. A compositionally biased stretch (polar residues) spans 280–291 (SSPSESTPAELK).

This is an uncharacterized protein from Mus musculus (Mouse).